The sequence spans 328 residues: Bcl-2/adenovirus E1B 19 kDa-interacting protein 2-like protein (328 aa).

Basic and acidic residues predominate over residues methionine 1 to proline 22. The disordered stretch occupies residues methionine 1–aspartate 116. Over residues arginine 36 to serine 45 the composition is skewed to polar residues. The segment covering alanine 76–serine 89 has biased composition (low complexity). The span at leucine 92–glutamine 105 shows a compositional bias: acidic residues. A compositionally biased stretch (basic and acidic residues) spans aspartate 107 to aspartate 116. Residues aspartate 162 to histidine 323 form the CRAL-TRIO domain.

As to quaternary structure, homodimer. Interacts with BCL2, ARHGAP1, MIF and GFER.

May be a bridge molecule between BCL2 and ARHGAP1/CDC42 in promoting cell death. This chain is Bcl-2/adenovirus E1B 19 kDa-interacting protein 2-like protein (Bnipl), found in Mus musculus (Mouse).